We begin with the raw amino-acid sequence, 201 residues long: Protein GrpE (201 aa).

This sequence belongs to the GrpE family. In terms of assembly, homodimer.

The protein localises to the cytoplasm. Participates actively in the response to hyperosmotic and heat shock by preventing the aggregation of stress-denatured proteins, in association with DnaK and GrpE. It is the nucleotide exchange factor for DnaK and may function as a thermosensor. Unfolded proteins bind initially to DnaJ; upon interaction with the DnaJ-bound protein, DnaK hydrolyzes its bound ATP, resulting in the formation of a stable complex. GrpE releases ADP from DnaK; ATP binding to DnaK triggers the release of the substrate protein, thus completing the reaction cycle. Several rounds of ATP-dependent interactions between DnaJ, DnaK and GrpE are required for fully efficient folding. This is Protein GrpE from Shewanella denitrificans (strain OS217 / ATCC BAA-1090 / DSM 15013).